Here is a 298-residue protein sequence, read N- to C-terminus: Mimecan (298 aa).

The N-terminal stretch at 1-19 (METVHSTFLLLLFVPLTQQ) is a signal peptide. An N-linked (GlcNAc...) (keratan sulfate) asparagine glycan is attached at asparagine 88. LRR repeat units follow at residues 112–131 (DAVP…FNKI), 132–155 (KKLT…GNLI), 156–179 (EDIE…ENQL), 180–199 (LRLP…HNKI), 200–225 (KSKG…HNDL), 226–246 (ESVP…FNSI), and 247–277 (SSLT…GNPI). Cysteine 255 and cysteine 288 are disulfide-bonded. An N-linked (GlcNAc...) (keratan sulfate) asparagine glycan is attached at asparagine 258.

It belongs to the small leucine-rich proteoglycan (SLRP) family. SLRP class III subfamily. Post-translationally, contains keratan sulfate.

Its subcellular location is the secreted. The protein localises to the extracellular space. It is found in the extracellular matrix. Induces bone formation in conjunction with TGF-beta-1 or TGF-beta-2. In Mus musculus (Mouse), this protein is Mimecan (Ogn).